The sequence spans 323 residues: Cytochrome c biogenesis protein CcsA (323 aa).

Transmembrane regions (helical) follow at residues 9–29, 45–62, 71–91, 98–118, 143–163, 227–247, 261–275, and 285–305; these read ILTH…LLNL, MMAT…RWIY, LYES…VPYF, LSAI…SGLL, MLLG…LLVI, IISL…VWAN, TWAF…IYLH, and VGPA…YFGV.

Belongs to the CcmF/CycK/Ccl1/NrfE/CcsA family. May interact with Ccs1.

It localises to the plastid. It is found in the chloroplast thylakoid membrane. In terms of biological role, required during biogenesis of c-type cytochromes (cytochrome c6 and cytochrome f) at the step of heme attachment. In Calycanthus floridus var. glaucus (Eastern sweetshrub), this protein is Cytochrome c biogenesis protein CcsA.